Here is a 238-residue protein sequence, read N- to C-terminus: MQFRNRFQRFMNHRAPANGRYKPTCYEHAANCYTHAFLIVPAIVGSALLHRLSDDCWEKITAWIYGMGLCALFIVSTVFHIVSWKKSHLRTVEHCFHMCDRMVIYFFIAASYAPWLNLRELGPLASHMRWFIWLMAAGGTIYVFLYHEKYKVVELFFYLTMGFSPALVVTSMNNTDGLQELACGGLIYCLGVVFFKSDGIIPFAHAIWHLFVATAAAVHYYAIWKYLYRSPTDFIRHL.

The Cytoplasmic segment spans residues 1–28 (MQFRNRFQRFMNHRAPANGRYKPTCYEH). A helical transmembrane segment spans residues 29–49 (AANCYTHAFLIVPAIVGSALL). Residues 50 to 61 (HRLSDDCWEKIT) lie on the Lumenal side of the membrane. Residues 62 to 82 (AWIYGMGLCALFIVSTVFHIV) traverse the membrane as a helical segment. At 83-101 (SWKKSHLRTVEHCFHMCDR) the chain is on the cytoplasmic side. A helical transmembrane segment spans residues 102-122 (MVIYFFIAASYAPWLNLRELG). A topological domain (lumenal) is located at residue proline 123. A helical membrane pass occupies residues 124 to 144 (LASHMRWFIWLMAAGGTIYVF). The Cytoplasmic segment spans residues 145–151 (LYHEKYK). A helical membrane pass occupies residues 152 to 172 (VVELFFYLTMGFSPALVVTSM). At 173–174 (NN) the chain is on the lumenal side. A helical transmembrane segment spans residues 175–195 (TDGLQELACGGLIYCLGVVFF). At 196-198 (KSD) the chain is on the cytoplasmic side. A helical transmembrane segment spans residues 199–219 (GIIPFAHAIWHLFVATAAAVH). At 220–238 (YYAIWKYLYRSPTDFIRHL) the chain is on the lumenal side.

It belongs to the ADIPOR family. Preferentially expressed in the brain.

It localises to the late endosome membrane. The protein localises to the lysosome membrane. Its function is as follows. Is involved in the dynamics of lysosomal membranes associated with microglial activation following brain lesion. The protein is Monocyte to macrophage differentiation factor of Rattus norvegicus (Rat).